Reading from the N-terminus, the 420-residue chain is Protein STB1 (420 aa).

The residue at position 2 (S2) is an N-acetylserine. The interaction with SWI6 stretch occupies residues 2 to 70 (SQPQMSPEKE…DEDHKTLLEA (69 aa)). A Phosphoserine modification is found at S7. 2 disordered regions span residues 30–187 (QLKL…SDNT) and 273–319 (DSPS…ELNG). A compositionally biased stretch (basic and acidic residues) spans 43–55 (RKQDSTTKKRSGE). Phosphoserine is present on S72. Position 99 is a phosphothreonine (T99). Position 102 is a phosphoserine (S102). A compositionally biased stretch (basic and acidic residues) spans 106 to 122 (RKAEDRSQQIKPRKEDT). The segment covering 156 to 169 (NNNNSSNHSNNNNN) has biased composition (low complexity). Polar residues predominate over residues 277 to 319 (LYLSNNNGSVQATLSPQQRRKPTTNTLHPPSNVPTTPSRELNG). T419 carries the phosphothreonine modification.

Interacts with the ANK repeats of SWI6. The interaction with SWI6 is required for function. Interacts with SIN3. Phosphorylated by CDC28 in a cell cycle-dependent manner, inhibiting the interaction with SWI6.

It localises to the cytoplasm. Its subcellular location is the nucleus. Its function is as follows. Involved in the regulation and timing of MBF-dependent transcription in late G1 of the cell cycle. This is Protein STB1 (STB1) from Saccharomyces cerevisiae (strain ATCC 204508 / S288c) (Baker's yeast).